Reading from the N-terminus, the 464-residue chain is A-type ATP synthase subunit B (464 aa).

It belongs to the ATPase alpha/beta chains family. In terms of assembly, has multiple subunits with at least A(3), B(3), C, D, E, F, H, I and proteolipid K(x).

It localises to the cell membrane. Component of the A-type ATP synthase that produces ATP from ADP in the presence of a proton gradient across the membrane. The B chain is a regulatory subunit. This is A-type ATP synthase subunit B from Methanococcus aeolicus (strain ATCC BAA-1280 / DSM 17508 / OCM 812 / Nankai-3).